Consider the following 358-residue polypeptide: C-X-C chemokine receptor type 4 (358 aa).

The important for chemokine binding and signaling stretch occupies residues 1 to 25 (MDGFSGGIDINIFDSNSTENGSGDF). The Extracellular portion of the chain corresponds to 1 to 44 (MDGFSGGIDINIFDSNSTENGSGDFEDFSEPCFMHDNSDFNRIF). N16 and N20 each carry an N-linked (GlcNAc...) asparagine glycan. 2 cysteine pairs are disulfide-bonded: C32–C281 and C113–C190. A helical membrane pass occupies residues 45 to 67 (LPTIYSFIFLLGIIGNGLVVVVM). Over 68–81 (GYQKKSRTMTDKYR) the chain is Cytoplasmic. Residues 82–103 (LHLSVADLLFVFTLPFWSVDAA) traverse the membrane as a helical segment. The segment at 98–101 (WSVD) is chemokine binding. Over 104-114 (IGWYFKEFLCK) the chain is Extracellular. A helical transmembrane segment spans residues 115–134 (AVHVIYTVNLYSSVLILAFI). Residues 117–121 (HVIYT) form a chemokine binding region. Residues 135-158 (SLDRYLAIVHATNSQGSRKMLADK) are Cytoplasmic-facing. Positions 139-151 (YLAIVHATNSQGS) are involved in dimerization; when bound to chemokine. Residues 159–178 (VVYAGVWLPALLLTVPDLVF) form a helical membrane-spanning segment. At 179 to 202 (ARVSDENGQFVCDRIYPIDNRETW) the chain is on the extracellular side. Positions 190–194 (CDRIY) are chemokine binding, important for signaling. A helical membrane pass occupies residues 203-223 (TVGFRFLHITVGLILPGLIIL). Over 224–248 (ICYCVIISKLSHSKGHQKRKALKTT) the chain is Cytoplasmic. A helical transmembrane segment spans residues 249 to 268 (VILILAFFACWLPYYVCLTT). Topologically, residues 269-289 (DTFMLLGLLKADCIWENTLHK) are extracellular. A helical transmembrane segment spans residues 290 to 309 (AISITEALAFFHCCLNPILY). Residues 310–358 (AFLGAKFKTSAQNAFTSVSRGSSLKILSKKRAGLSSVSTESESSSFHSS) lie on the Cytoplasmic side of the membrane. Residues 338–358 (KKRAGLSSVSTESESSSFHSS) form a disordered region. Positions 344 to 358 (SSVSTESESSSFHSS) are enriched in low complexity.

This sequence belongs to the G-protein coupled receptor 1 family. In terms of assembly, monomer. Can form dimers. Sulfation is required for efficient binding of cxcl12/sdf-1alpha and promotes its dimerization. In terms of processing, O- and N-glycosylated.

Its subcellular location is the cell membrane. It localises to the cytoplasm. The protein localises to the nucleus. The protein resides in the early endosome. It is found in the late endosome. Its subcellular location is the lysosome. In terms of biological role, receptor for the C-X-C chemokine cxcl12/sdf-1. Transduces a signal by increasing the intracellular calcium ion level. Signaling with cxcl12/sdf-1 mediates the directional movement of mesodermal cells during gastrulation. May play a role in the migration of embryonic presumptive primordial germ cells (pPGCs). May also be involved in regulating migration of hematopoietic stem cells into the larval liver. In Xenopus tropicalis (Western clawed frog), this protein is C-X-C chemokine receptor type 4.